The chain runs to 380 residues: Probable pectin lyase A (380 aa).

Positions 1-20 (MRYTSLFTAVTAALASTAAA) are cleaved as a signal peptide. 2 disulfides stabilise this stretch: cysteine 83-cysteine 102 and cysteine 92-cysteine 226. The N-linked (GlcNAc...) asparagine glycan is linked to asparagine 129. Arginine 256 is a catalytic residue. A disulfide bridge connects residues cysteine 323 and cysteine 331.

This sequence belongs to the polysaccharide lyase 1 family.

The protein localises to the secreted. The enzyme catalyses Eliminative cleavage of (1-&gt;4)-alpha-D-galacturonan methyl ester to give oligosaccharides with 4-deoxy-6-O-methyl-alpha-D-galact-4-enuronosyl groups at their non-reducing ends.. In terms of biological role, pectinolytic enzymes consist of four classes of enzymes: pectin lyase, polygalacturonase, pectin methylesterase and rhamnogalacturonase. Among pectinolytic enzymes, pectin lyase is the most important in depolymerization of pectin, since it cleaves internal glycosidic bonds of highly methylated pectins. The sequence is that of Probable pectin lyase A (pelA) from Aspergillus fumigatus (strain ATCC MYA-4609 / CBS 101355 / FGSC A1100 / Af293) (Neosartorya fumigata).